Reading from the N-terminus, the 338-residue chain is MPYKRITLTHFLLQEQRRLGGSGSFTALMTDIIFACKMISHEVNRGALAGNLGVAGSENVQGEEQKKLDVLANDIFLHMNALGGSYAGMASEELEDVHAVHGAADGKYLLLFDPLDGSSNIDVNISVGSIFSILKLPEGANAGSKDAFLQPGVKQVAAGYALYGSSTMLVLTTGNGVNGFTLDNNVGMFLLTHPNMTIPADTKEFAINASRERFWEPPVKRYIDECRQGKEGPRGKDFNMRWVASMVAEVHRILCRGGVFLYPADTENMKKGGKLRLMYEANPMAFIVEQAGGAATTGRGRMMEVPPTGLHQRVPVILGSKEEVERIGAYHAEYDAKK.

Mg(2+) is bound by residues Glu92, Asp113, Leu115, and Asp116. Residues 116–119, Asn208, and Lys274 contribute to the substrate site; that span reads DGSS. A Mg(2+)-binding site is contributed by Glu280.

This sequence belongs to the FBPase class 1 family. In terms of assembly, homotetramer. The cofactor is Mg(2+).

It localises to the cytoplasm. It carries out the reaction beta-D-fructose 1,6-bisphosphate + H2O = beta-D-fructose 6-phosphate + phosphate. It participates in carbohydrate biosynthesis; gluconeogenesis. In Paramagnetospirillum magneticum (strain ATCC 700264 / AMB-1) (Magnetospirillum magneticum), this protein is Fructose-1,6-bisphosphatase class 1.